The chain runs to 524 residues: 2-isopropylmalate synthase (524 aa).

Positions 12–274 constitute a Pyruvate carboxyltransferase domain; that stretch reads VIIFDTTLRD…WNRIESKMLT (263 aa). The Mn(2+) site is built by Asp-21, His-209, His-211, and Asn-245. Residues 398-524 are regulatory domain; sequence RLKSLTVIAG…QDAPAVAVAG (127 aa).

This sequence belongs to the alpha-IPM synthase/homocitrate synthase family. LeuA type 1 subfamily. As to quaternary structure, homodimer. It depends on Mn(2+) as a cofactor.

It is found in the cytoplasm. It carries out the reaction 3-methyl-2-oxobutanoate + acetyl-CoA + H2O = (2S)-2-isopropylmalate + CoA + H(+). It functions in the pathway amino-acid biosynthesis; L-leucine biosynthesis; L-leucine from 3-methyl-2-oxobutanoate: step 1/4. Catalyzes the condensation of the acetyl group of acetyl-CoA with 3-methyl-2-oxobutanoate (2-ketoisovalerate) to form 3-carboxy-3-hydroxy-4-methylpentanoate (2-isopropylmalate). The chain is 2-isopropylmalate synthase from Rhodopseudomonas palustris (strain BisB5).